The following is a 601-amino-acid chain: MDQINVLINKLIYDTMNNITSLMLAVSNYEIHDNYDTVKSLIDCGFDVNAVDKHGKSVLMYAINIDSDKNINVIKLLIDHGADVNHVDSYQRSVLIHTCMYMEYGYNNKTISLLIDKGANINYICNGKNILMMIHKYLSEETFQEVFHLINNKIDINYNRSGIIRENILMRIIKKLDNKYSITTIKLLLEHGINIDHINIYGQTALMYACIYINGLKNIPIIKLLLEYGANINSKCTKGWSPLMSVFKNDIIDIKTIKFLVEKGAEINSKNCKNETMLYVFCKKLSTRIYGQACVKIFDFLIKKGISIDNPNDKGYTPLMAFIIKISEYNEYTEKFIKLLLDYGANINSKDIHGSSILNKVCCDVVSGSVSHCKIEIINTLIKYGADVNSTTLDHKTILMNLRYSIHSENYITVLEILLRNGANPNIYDEKYHKFPLLIDILNRGGELRIIKLMLQYNIDPNIVDNIGNNALLFVAKHYKKNERFSFLKLLLTYGASYNCVNKKGKSFSDYVLDKEVEYYSRTITNLSKDNRIMKNVIDSIPIKVPEKIYCLESFKMKIIRFKWNLCNRIDYDDEAIMNYLGTNDPVRLIQIIDESIKYDH.

12 ANK repeats span residues 17–50 (NNITSLMLAVSNYEIHDNYDTVKSLIDCGFDVNA), 54–86 (HGKSVLMYAINIDSDKNINVIKLLIDHGADVNH), 91–123 (QRSVLIHTCMYMEYGYNNKTISLLIDKGANINY), 165–197 (RENILMRIIKKLDNKYSITTIKLLLEHGINIDH), 201–234 (YGQTALMYACIYINGLKNIPIIKLLLEYGANINS), 238–269 (KGWSPLMSVFKNDIIDIKTIKFLVEKGAEINS), 274–310 (NETMLYVFCKKLSTRIYGQACVKIFDFLIKKGISIDN), 314–349 (KGYTPLMAFIIKISEYNEYTEKFIKLLLDYGANINS), 361–390 (VCCDVVSGSVSHCKIEIINTLIKYGADVNS), 397–427 (TILMNLRYSIHSENYITVLEILLRNGANPNI), 432–463 (YHKFPLLIDILNRGGELRIIKLMLQYNIDPNI), and 467–500 (IGNNALLFVAKHYKKNERFSFLKLLLTYGASYNC).

The protein is Putative ankyrin repeat protein R841 of Acanthamoeba polyphaga mimivirus (APMV).